A 326-amino-acid chain; its full sequence is 4-hydroxythreonine-4-phosphate dehydrogenase (326 aa).

Substrate-binding residues include histidine 130 and threonine 131. A divalent metal cation is bound by residues histidine 160, histidine 205, and histidine 260. Positions 268, 277, and 286 each coordinate substrate.

It belongs to the PdxA family. In terms of assembly, homodimer. Requires Zn(2+) as cofactor. Mg(2+) is required as a cofactor. The cofactor is Co(2+).

The protein localises to the cytoplasm. The enzyme catalyses 4-(phosphooxy)-L-threonine + NAD(+) = 3-amino-2-oxopropyl phosphate + CO2 + NADH. Its pathway is cofactor biosynthesis; pyridoxine 5'-phosphate biosynthesis; pyridoxine 5'-phosphate from D-erythrose 4-phosphate: step 4/5. Catalyzes the NAD(P)-dependent oxidation of 4-(phosphooxy)-L-threonine (HTP) into 2-amino-3-oxo-4-(phosphooxy)butyric acid which spontaneously decarboxylates to form 3-amino-2-oxopropyl phosphate (AHAP). The sequence is that of 4-hydroxythreonine-4-phosphate dehydrogenase from Aromatoleum aromaticum (strain DSM 19018 / LMG 30748 / EbN1) (Azoarcus sp. (strain EbN1)).